The following is a 307-amino-acid chain: Protoheme IX farnesyltransferase (307 aa).

Helical transmembrane passes span 32–52 (MGIV…ALHF), 65–85 (FFTI…NNYI), 108–128 (PGFA…FLLL), 131–151 (PMAV…YSLW), 158–178 (LNTV…WAAI), 186–206 (IAWM…LALA), 251–271 (LGIT…VLGF), and 287–307 (FVYS…VTFF).

It belongs to the UbiA prenyltransferase family. Protoheme IX farnesyltransferase subfamily. Interacts with CtaA.

Its subcellular location is the cell membrane. The catalysed reaction is heme b + (2E,6E)-farnesyl diphosphate + H2O = Fe(II)-heme o + diphosphate. It functions in the pathway porphyrin-containing compound metabolism; heme O biosynthesis; heme O from protoheme: step 1/1. In terms of biological role, converts heme B (protoheme IX) to heme O by substitution of the vinyl group on carbon 2 of heme B porphyrin ring with a hydroxyethyl farnesyl side group. In Bacillus anthracis (strain A0248), this protein is Protoheme IX farnesyltransferase.